Here is a 276-residue protein sequence, read N- to C-terminus: Undecaprenyl-diphosphatase 2 (276 aa).

7 helical membrane-spanning segments follow: residues 3 to 23 (IWDI…EYAP), 48 to 68 (AANT…AFVF), 92 to 112 (LSIA…FLFE), 119 to 139 (LFSV…MLAA), 196 to 216 (ADFT…LSLI), 225 to 245 (DLLP…LFVV), and 255 to 275 (IKLV…FILF).

This sequence belongs to the UppP family.

The protein localises to the cell membrane. The catalysed reaction is di-trans,octa-cis-undecaprenyl diphosphate + H2O = di-trans,octa-cis-undecaprenyl phosphate + phosphate + H(+). In terms of biological role, catalyzes the dephosphorylation of undecaprenyl diphosphate (UPP). Confers resistance to bacitracin. The protein is Undecaprenyl-diphosphatase 2 of Bacillus licheniformis (strain ATCC 14580 / DSM 13 / JCM 2505 / CCUG 7422 / NBRC 12200 / NCIMB 9375 / NCTC 10341 / NRRL NRS-1264 / Gibson 46).